Here is a 352-residue protein sequence, read N- to C-terminus: Holliday junction branch migration complex subunit RuvB (352 aa).

The interval 4–191 (TDKFSAPDRV…FGIVARLEFY (188 aa)) is large ATPase domain (RuvB-L). Residues leucine 30, arginine 31, glycine 72, lysine 75, threonine 76, threonine 77, 138–140 (EDY), arginine 181, tyrosine 191, and arginine 228 contribute to the ATP site. Position 76 (threonine 76) interacts with Mg(2+). A small ATPAse domain (RuvB-S) region spans residues 192 to 262 (TAEELARIVT…IADAALAMLD (71 aa)). The interval 265-352 (RVGFDLMDRK…GDSGDLIDGE (88 aa)) is head domain (RuvB-H). Residues arginine 301, arginine 320, and arginine 325 each coordinate DNA.

It belongs to the RuvB family. In terms of assembly, homohexamer. Forms an RuvA(8)-RuvB(12)-Holliday junction (HJ) complex. HJ DNA is sandwiched between 2 RuvA tetramers; dsDNA enters through RuvA and exits via RuvB. An RuvB hexamer assembles on each DNA strand where it exits the tetramer. Each RuvB hexamer is contacted by two RuvA subunits (via domain III) on 2 adjacent RuvB subunits; this complex drives branch migration. In the full resolvosome a probable DNA-RuvA(4)-RuvB(12)-RuvC(2) complex forms which resolves the HJ.

It localises to the cytoplasm. The catalysed reaction is ATP + H2O = ADP + phosphate + H(+). The RuvA-RuvB-RuvC complex processes Holliday junction (HJ) DNA during genetic recombination and DNA repair, while the RuvA-RuvB complex plays an important role in the rescue of blocked DNA replication forks via replication fork reversal (RFR). RuvA specifically binds to HJ cruciform DNA, conferring on it an open structure. The RuvB hexamer acts as an ATP-dependent pump, pulling dsDNA into and through the RuvAB complex. RuvB forms 2 homohexamers on either side of HJ DNA bound by 1 or 2 RuvA tetramers; 4 subunits per hexamer contact DNA at a time. Coordinated motions by a converter formed by DNA-disengaged RuvB subunits stimulates ATP hydrolysis and nucleotide exchange. Immobilization of the converter enables RuvB to convert the ATP-contained energy into a lever motion, pulling 2 nucleotides of DNA out of the RuvA tetramer per ATP hydrolyzed, thus driving DNA branch migration. The RuvB motors rotate together with the DNA substrate, which together with the progressing nucleotide cycle form the mechanistic basis for DNA recombination by continuous HJ branch migration. Branch migration allows RuvC to scan DNA until it finds its consensus sequence, where it cleaves and resolves cruciform DNA. In Cupriavidus pinatubonensis (strain JMP 134 / LMG 1197) (Cupriavidus necator (strain JMP 134)), this protein is Holliday junction branch migration complex subunit RuvB.